Here is a 79-residue protein sequence, read N- to C-terminus: MWIYILVGIICLLAGLAGGFFIARRYMMSYLKNNPPINEQMLQMMMAQMGQKPSQKKINQMMSAMNKQQEKEKPKKTKK.

Residues 2–22 (WIYILVGIICLLAGLAGGFFI) traverse the membrane as a helical segment. Over residues 57-66 (KINQMMSAMN) the composition is skewed to polar residues. The tract at residues 57–79 (KINQMMSAMNKQQEKEKPKKTKK) is disordered.

It belongs to the UPF0154 family.

The protein localises to the cell membrane. The chain is UPF0154 protein Lm4b_01315 from Listeria monocytogenes serotype 4b (strain CLIP80459).